The following is a 102-amino-acid chain: DET1- and DDB1-associated protein 1 (102 aa).

N-acetylalanine is present on alanine 2. Serine 33 and serine 95 each carry phosphoserine. A disordered region spans residues 67-102 (NAAKKRDQEQVEAEGESSAPPRKVARTDSPDMPEDT).

This sequence belongs to the DDA1 family. In terms of assembly, component of numerous DCX (DDB1-CUL4-X-box) E3 ubiquitin-protein ligase complexes which consist of a core of DDB1, cullin-4 (CUL4A or CUL4B), DDA1 and RBX1. Component of the DCX(DCAF15) complex, also named CLR4(DCAF15) complex, composed of DCAF15, DDB1, cullin-4 (CUL4A or CUL4B), DDA1 and RBX1. Part of the DDD core complex containing DET1, DDA1 and DDB1; the DDD core complex recruits a specific UBE2E enzyme, such as UBE2E1, UBE2E2 UBE2E3, to form specific DDD-E2 complexes.

Its pathway is protein modification; protein ubiquitination. In terms of biological role, functions as a component of numerous distinct DCX (DDB1-CUL4-X-box) E3 ubiquitin-protein ligase complexes which mediate the ubiquitination and subsequent proteasomal degradation of target proteins. In the DCX complexes, acts as a scaffolding subunit required to stabilize the complex. In Mus musculus (Mouse), this protein is DET1- and DDB1-associated protein 1.